A 766-amino-acid chain; its full sequence is Nucleolar complex protein 2 (766 aa).

Residues 1–12 show a composition bias toward basic residues; sequence MKLATKKIKTLG. Disordered regions lie at residues 1–73, 100–154, and 674–766; these read MKLA…EELE, DTDD…DEED, and KTGV…LNEW. A compositionally biased stretch (basic and acidic residues) spans 14–29; the sequence is SKPDLSKKKPAKDAIR. Over residues 33–42 the composition is skewed to polar residues; that stretch reads PQTTSETKVT. Over residues 58-67 the composition is skewed to basic residues; the sequence is KTTKKGFKKS. Residues 100-115 are compositionally biased toward acidic residues; sequence DTDDDDDEEGDEEDKE. T101 bears the Phosphothreonine mark. Basic and acidic residues predominate over residues 130–140; it reads EKYHKPSKDLE. Acidic residues predominate over residues 141–154; that stretch reads VASDESDFEVDEED. Phosphoserine occurs at positions 143, 146, 691, 693, and 705. A compositionally biased stretch (acidic residues) spans 706–720; that stretch reads DDDDDEDVQEEEEVE. Over residues 757–766 the composition is skewed to basic and acidic residues; it reads IVKDLDLNEW.

The protein belongs to the NOC2 family.

It localises to the nucleus. The protein is Nucleolar complex protein 2 of Drosophila melanogaster (Fruit fly).